Reading from the N-terminus, the 1360-residue chain is DNA-directed RNA polymerase subunit beta (1360 aa).

It belongs to the RNA polymerase beta chain family. The RNAP catalytic core consists of 2 alpha, 1 beta, 1 beta' and 1 omega subunit. When a sigma factor is associated with the core the holoenzyme is formed, which can initiate transcription.

It catalyses the reaction RNA(n) + a ribonucleoside 5'-triphosphate = RNA(n+1) + diphosphate. DNA-dependent RNA polymerase catalyzes the transcription of DNA into RNA using the four ribonucleoside triphosphates as substrates. The sequence is that of DNA-directed RNA polymerase subunit beta from Magnetococcus marinus (strain ATCC BAA-1437 / JCM 17883 / MC-1).